Here is a 124-residue protein sequence, read N- to C-terminus: Glucagon-1 (124 aa).

The first 25 residues, 1–25 (MKRIHSLAGILLVLGLIQSSCRVLM), serve as a signal peptide directing secretion. A disordered region spans residues 28-54 (ADPSSSLEADSTLKDEPRELSNMKRHS). Residues 38 to 54 (STLKDEPRELSNMKRHS) show a composition bias toward basic and acidic residues. A propeptide spanning residues 84 to 88 (SGVAE) is cleaved from the precursor.

This sequence belongs to the glucagon family.

Its subcellular location is the secreted. In terms of biological role, glucagon plays a key role in glucose metabolism and homeostasis. Regulates blood glucose by increasing gluconeogenesis and decreasing glycolysis. In Lophius americanus (American angler), this protein is Glucagon-1 (gcg1).